A 228-amino-acid polypeptide reads, in one-letter code: Aspartate racemase (228 aa).

Residue 47–49 coordinates substrate; that stretch reads DRT. Catalysis depends on cysteine 82, which acts as the Proton donor/acceptor. Substrate-binding positions include 83-85 and lysine 164; that span reads NTA. Cysteine 194 serves as the catalytic Proton donor/acceptor.

The protein belongs to the aspartate/glutamate racemases family. Homodimer. The existence of the interchain disulfide bond seen in the crystal structures is uncertain, but disulfide bonds have been reported for cytoplasmic proteins from thermophiles.

The catalysed reaction is L-aspartate = D-aspartate. Weakly inhibited by citrate, but not by asparagine. This is Aspartate racemase from Pyrococcus horikoshii (strain ATCC 700860 / DSM 12428 / JCM 9974 / NBRC 100139 / OT-3).